We begin with the raw amino-acid sequence, 405 residues long: L-carnitine CoA-transferase (405 aa).

Residues K97 and R104 each coordinate CoA. Catalysis depends on D169, which acts as the Nucleophile.

Belongs to the CoA-transferase III family. CaiB subfamily. In terms of assembly, homodimer.

Its subcellular location is the cytoplasm. The catalysed reaction is crotonobetainyl-CoA + (R)-carnitine = crotonobetaine + (R)-carnitinyl-CoA. It catalyses the reaction 4-(trimethylamino)butanoyl-CoA + (R)-carnitine = (R)-carnitinyl-CoA + 4-(trimethylamino)butanoate. It participates in amine and polyamine metabolism; carnitine metabolism. Its function is as follows. Catalyzes the reversible transfer of the CoA moiety from gamma-butyrobetainyl-CoA to L-carnitine to generate L-carnitinyl-CoA and gamma-butyrobetaine. Is also able to catalyze the reversible transfer of the CoA moiety from gamma-butyrobetainyl-CoA or L-carnitinyl-CoA to crotonobetaine to generate crotonobetainyl-CoA. The chain is L-carnitine CoA-transferase from Escherichia coli O6:K15:H31 (strain 536 / UPEC).